The following is a 476-amino-acid chain: Sulfate adenylyltransferase subunit 1 (476 aa).

The region spanning 24–238 (KSLLRFLTCG…ELLEYVDIDR (215 aa)) is the tr-type G domain. A G1 region spans residues 33-40 (GSVDDGKS). A GTP-binding site is contributed by 33–40 (GSVDDGKS). The tract at residues 91-95 (GITID) is G2. The tract at residues 112–115 (DTPG) is G3. Residues 112-116 (DTPGH) and 167-170 (NKMD) contribute to the GTP site. Residues 167-170 (NKMD) form a G4 region. A G5 region spans residues 205–207 (SAL).

It belongs to the TRAFAC class translation factor GTPase superfamily. Classic translation factor GTPase family. CysN/NodQ subfamily. Heterodimer composed of CysD, the smaller subunit, and CysN.

It carries out the reaction sulfate + ATP + H(+) = adenosine 5'-phosphosulfate + diphosphate. It participates in sulfur metabolism; hydrogen sulfide biosynthesis; sulfite from sulfate: step 1/3. Functionally, with CysD forms the ATP sulfurylase (ATPS) that catalyzes the adenylation of sulfate producing adenosine 5'-phosphosulfate (APS) and diphosphate, the first enzymatic step in sulfur assimilation pathway. APS synthesis involves the formation of a high-energy phosphoric-sulfuric acid anhydride bond driven by GTP hydrolysis by CysN coupled to ATP hydrolysis by CysD. The polypeptide is Sulfate adenylyltransferase subunit 1 (Vibrio cholerae serotype O1 (strain M66-2)).